The sequence spans 236 residues: Small ribosomal subunit protein uS3 (236 aa).

One can recognise a KH type-2 domain in the interval 39-107; the sequence is IREFLTEELK…DTSLNIVEVR (69 aa). Residues 214–236 form a disordered region; it reads ASERRAVEGDNQGSSSNRRRENA.

The protein belongs to the universal ribosomal protein uS3 family. As to quaternary structure, part of the 30S ribosomal subunit. Forms a tight complex with proteins S10 and S14.

Functionally, binds the lower part of the 30S subunit head. Binds mRNA in the 70S ribosome, positioning it for translation. The chain is Small ribosomal subunit protein uS3 from Brucella anthropi (strain ATCC 49188 / DSM 6882 / CCUG 24695 / JCM 21032 / LMG 3331 / NBRC 15819 / NCTC 12168 / Alc 37) (Ochrobactrum anthropi).